A 217-amino-acid polypeptide reads, in one-letter code: Protein GrpE (217 aa).

Over residues 1 to 10 the composition is skewed to basic and acidic residues; the sequence is MSDHAEHAAD. Residues 1–39 form a disordered region; that stretch reads MSDHAEHAADAADTDAPEGDDAGGDDGEQAGDDGTSALS. Residues 12 to 31 show a composition bias toward acidic residues; the sequence is ADTDAPEGDDAGGDDGEQAG.

It belongs to the GrpE family. In terms of assembly, homodimer.

The protein resides in the cytoplasm. Its function is as follows. Participates actively in the response to hyperosmotic and heat shock by preventing the aggregation of stress-denatured proteins, in association with DnaK and GrpE. It is the nucleotide exchange factor for DnaK and may function as a thermosensor. Unfolded proteins bind initially to DnaJ; upon interaction with the DnaJ-bound protein, DnaK hydrolyzes its bound ATP, resulting in the formation of a stable complex. GrpE releases ADP from DnaK; ATP binding to DnaK triggers the release of the substrate protein, thus completing the reaction cycle. Several rounds of ATP-dependent interactions between DnaJ, DnaK and GrpE are required for fully efficient folding. This is Protein GrpE from Halobacterium salinarum (strain ATCC 29341 / DSM 671 / R1).